Here is a 30-residue protein sequence, read N- to C-terminus: Cycloviolacin-H1 (30 aa).

A cross-link (cyclopeptide (Gly-Asn)) is located at residues 1–30 (GIPCGESCVYIPCLTSAIGCSCKSKVCYRN). Intrachain disulfides connect cysteine 4–cysteine 20, cysteine 8–cysteine 22, and cysteine 13–cysteine 27.

The protein belongs to the cyclotide family. Bracelet subfamily. This is a cyclic peptide.

Its function is as follows. Probably participates in a plant defense mechanism. The protein is Cycloviolacin-H1 of Viola hederacea (Australian violet).